Consider the following 498-residue polypeptide: MSKKGKKAKVPLSDEEQLLLFQQKLLAEEEMAKKKERLLNQFLKDKLAKEEHNSALNLNKINTQWRTVLREIKTRELHKDIEILSQTFERVVDCKDSVIKSLAKDLSEAEEQHAHALRSHLHSIDQLLALQRCRLNLLEENYNMELEALTKEFETERKTIIDQHEKEIHYLQDVFMAMEQNYIDSEYESKLEFQSMWDDLKNKNLEEKHFLRLQLENIVEDLWRRFQDALKNYTDATEDRKIAFETLKVKDEKSSREIEAQMKKIQKLQDSIIIFKGKILVHSRESEEQNQDIREDKELVLVQLRKLKAQRTQARGIAQENLVKLTLESSATLKALREIVDKGEKILKLAEICRKFETEEEKVLPFYSSVLTPKEQEEIETMDLEEFNEELGKVIMDYKGMENFWKRYNKVKLEQLSLRHRRAQLLEINEKLREMLRQYLDGISVSDEVLSQLNPLFIVNHRSNLPQLLPMPTAQPGDKKPPATYNIIEAAHVVSHTL.

Coiled coils occupy residues 98-160 (VIKS…RKTI), 250-311 (KDEK…KAQR), and 417-441 (SLRHRRAQLLEINEKLREMLRQYLD).

It belongs to the DRC2 family. Component of the nexin-dynein regulatory complex (N-DRC). Interacts with DRC1.

Its subcellular location is the cytoplasm. It localises to the cytoskeleton. The protein localises to the flagellum basal body. It is found in the cell projection. The protein resides in the cilium. Its subcellular location is the flagellum. It localises to the flagellum axoneme. Functionally, component of the nexin-dynein regulatory complex (N-DRC), a key regulator of ciliary/flagellar motility which maintains the alignment and integrity of the distal axoneme and regulates microtubule sliding in motile axonemes. Plays a critical role in the assembly of N-DRC and also stabilizes the assembly of multiple inner dynein arms and radial spokes. Coassembles with DRC1 to form a central scaffold needed for assembly of the N-DRC and its attachment to the outer doublet microtubules. The chain is Dynein regulatory complex subunit 2 (CCDC65) from Bos taurus (Bovine).